The primary structure comprises 306 residues: Protein-methionine-sulfoxide reductase catalytic subunit MsrP (306 aa).

Positions 1–45 (MLIRHAPDLTDNDVTDHSLYLKRRTLMAGVAGLGVAGASASHAQA) form a signal peptide, tat-type signal. Residues asparagine 69, 72 to 73 (YE), cysteine 127, threonine 162, asparagine 210, arginine 215, and 226 to 228 (GIK) each bind Mo-molybdopterin.

This sequence belongs to the MsrP family. Heterodimer of a catalytic subunit (MsrP) and a heme-binding subunit (MsrQ). The cofactor is Mo-molybdopterin. In terms of processing, predicted to be exported by the Tat system. The position of the signal peptide cleavage has not been experimentally proven.

It is found in the periplasm. It carries out the reaction L-methionyl-[protein] + a quinone + H2O = L-methionyl-(S)-S-oxide-[protein] + a quinol. The enzyme catalyses L-methionyl-[protein] + a quinone + H2O = L-methionyl-(R)-S-oxide-[protein] + a quinol. Part of the MsrPQ system that repairs oxidized periplasmic proteins containing methionine sulfoxide residues (Met-O), using respiratory chain electrons. Thus protects these proteins from oxidative-stress damage caused by reactive species of oxygen and chlorine generated by the host defense mechanisms. MsrPQ is essential for the maintenance of envelope integrity under bleach stress, rescuing a wide series of structurally unrelated periplasmic proteins from methionine oxidation. The catalytic subunit MsrP is non-stereospecific, being able to reduce both (R-) and (S-) diastereoisomers of methionine sulfoxide. This is Protein-methionine-sulfoxide reductase catalytic subunit MsrP from Caulobacter vibrioides (strain ATCC 19089 / CIP 103742 / CB 15) (Caulobacter crescentus).